Here is a 785-residue protein sequence, read N- to C-terminus: Protein translocase subunit SecA 3 (785 aa).

ATP contacts are provided by residues Gln98, 116–120 (GEGKT), and Asp505.

It belongs to the SecA family. Monomer and homodimer. Part of the essential Sec protein translocation apparatus which comprises SecA, SecYEG and auxiliary proteins SecDF. Other proteins may also be involved.

The protein localises to the cell membrane. Its subcellular location is the cytoplasm. It carries out the reaction ATP + H2O + cellular proteinSide 1 = ADP + phosphate + cellular proteinSide 2.. Part of the Sec protein translocase complex. Interacts with the SecYEG preprotein conducting channel. Has a central role in coupling the hydrolysis of ATP to the transfer of proteins into and across the cell membrane, serving as an ATP-driven molecular motor driving the stepwise translocation of polypeptide chains across the membrane. This chain is Protein translocase subunit SecA 3, found in Mycolicibacterium vanbaalenii (strain DSM 7251 / JCM 13017 / BCRC 16820 / KCTC 9966 / NRRL B-24157 / PYR-1) (Mycobacterium vanbaalenii).